A 270-amino-acid chain; its full sequence is Gap junction beta-3 protein (270 aa).

The Cytoplasmic segment spans residues M1–F20. The chain crosses the membrane as a helical span at residues G21–A40. The Extracellular portion of the chain corresponds to E41–R75. Residues L76–R98 traverse the membrane as a helical segment. Topologically, residues E99–G126 are cytoplasmic. A helical membrane pass occupies residues L127–L149. The Extracellular portion of the chain corresponds to H150–T188. The helical transmembrane segment at Y189–F211 threads the bilayer. The Cytoplasmic segment spans residues H212 to I270.

Belongs to the connexin family. Beta-type (group I) subfamily. In terms of assembly, a connexon is composed of a hexamer of connexins. Interacts with CNST.

It localises to the cell membrane. It is found in the cell junction. Its subcellular location is the gap junction. One gap junction consists of a cluster of closely packed pairs of transmembrane channels, the connexons, through which materials of low MW diffuse from one cell to a neighboring cell. In Rattus norvegicus (Rat), this protein is Gap junction beta-3 protein (Gjb3).